A 277-amino-acid chain; its full sequence is MGQKVNPHGFRLGITTDHVSHWFADSTKAGQRYKDFVREDIRIRQLMSTGMERAGIAKVEIERTRDRVRVDIHTARPGIVIGRRGAEADRIRGELEKLTGKQVQLNILEVKNPEMEAQLVAQGVAEQLTSRVAFRRAMKKAMQSAQRAGAKGIRIACSGRLGGAEMSRSEFYREGRVPLHTLRANIDYGFYEAKTTFGRIGVKVWIYKGDVTSKELAQQAAAAPSRGRGASDRPGRPGGADRGDRRRRTDRPAAEAAPAAEAPAVEAAAPAVEGGQA.

Residues 43 to 111 (IRQLMSTGME…QVQLNILEVK (69 aa)) enclose the KH type-2 domain. The segment covering 218 to 228 (QQAAAAPSRGR) has biased composition (low complexity). Residues 218–277 (QQAAAAPSRGRGASDRPGRPGGADRGDRRRRTDRPAAEAAPAAEAPAVEAAAPAVEGGQA) are disordered. Positions 229–244 (GASDRPGRPGGADRGD) are enriched in basic and acidic residues. Over residues 254–277 (AEAAPAAEAPAVEAAAPAVEGGQA) the composition is skewed to low complexity.

Belongs to the universal ribosomal protein uS3 family. In terms of assembly, part of the 30S ribosomal subunit. Forms a tight complex with proteins S10 and S14.

Functionally, binds the lower part of the 30S subunit head. Binds mRNA in the 70S ribosome, positioning it for translation. The chain is Small ribosomal subunit protein uS3 from Arthrobacter sp. (strain FB24).